The primary structure comprises 537 residues: Beta-hexosaminidase subunit beta (537 aa).

Residues 1 to 23 form the signal peptide; that stretch reads MPGSPRRAPGLLLQALVAMVSLA. N62 carries N-linked (GlcNAc...) asparagine glycosylation. The cysteines at positions 69 and 115 are disulfide-linked. N168 and N305 each carry an N-linked (GlcNAc...) asparagine glycan. 2 disulfide bridges follow: C287–C338 and C512–C529. E333 acts as the Proton donor in catalysis.

Belongs to the glycosyl hydrolase 20 family. In terms of assembly, there are 3 forms of beta-hexosaminidase: hexosaminidase A is a heterodimer composed of one subunit alpha and one subunit beta (chain A and B); hexosaminidase B is a homodimer of two beta subunits (two chains A and B); hexosaminidase S is a homodimer of two alpha subunits. The composition of the dimer (isozyme A versus isozyme S) has a significant effect on the substrate specificity of the alpha subunit active site.

It localises to the lysosome. The protein localises to the cytoplasmic vesicle. Its subcellular location is the secretory vesicle. It is found in the cortical granule. It catalyses the reaction Hydrolysis of terminal non-reducing N-acetyl-D-hexosamine residues in N-acetyl-beta-D-hexosaminides.. The catalysed reaction is N-acetyl-beta-D-galactosaminyl-(1-&gt;4)-beta-D-3-sulfogalactosyl-(1-&gt;4)-beta-D-glucosyl-(1&lt;-&gt;1')-ceramide + H2O = a beta-D-3-sulfogalactosyl-(1-&gt;4)-beta-D-glucosyl-(1&lt;-&gt;1')-ceramide + N-acetyl-beta-D-galactosamine. It carries out the reaction a ganglioside GM2 (d18:1(4E)) + H2O = a ganglioside GM3 (d18:1(4E)) + N-acetyl-beta-D-galactosamine. The enzyme catalyses a ganglioside GM2 + H2O = a ganglioside GM3 + N-acetyl-beta-D-galactosamine. It catalyses the reaction beta-D-GalNAc-(1-&gt;4)-alpha-L-IdoA-(1-&gt;3)-beta-D-GalNAc-4-sulfate-(1-&gt;4)-alpha-L-IdoA-(1-&gt;3)-D-GalNAc-4-sulfate + H2O = alpha-L-IdoA-(1-&gt;3)-beta-D-GalNAc-4-sulfate-(1-&gt;4)-alpha-L-IdoA-(1-&gt;3)-D-GalNAc-4-sulfate + N-acetyl-D-galactosamine. The catalysed reaction is N-acetyl-beta-D-6-sulfogalactosaminyl-(1-&gt;4)-alpha-L-iduronyl-(1-&gt;3)-N-acetyl-D-6-sulfogalactosamine + H2O = alpha-L-iduronyl-(1-&gt;3)-N-acetyl-D-6-sulfogalactosamine + N-acetyl-D-6-sulfogalactosamine. Addition of GM2A stimulates the hydrolysis of sulfated glycosphingolipid SM2 and the ganglioside GM2. Its function is as follows. Hydrolyzes the non-reducing end N-acetyl-D-hexosamine and/or sulfated N-acetyl-D-hexosamine of glycoconjugates, such as the oligosaccharide moieties from proteins and neutral glycolipids, or from certain mucopolysaccharides. The isozyme B does not hydrolyze each of these substrates, however hydrolyzes efficiently neutral oligosaccharide. Only the isozyme A is responsible for the degradation of GM2 gangliosides in the presence of GM2A. During fertilization is responsible, at least in part, for the zona block to polyspermy. Present in the cortical granules of non-activated oocytes, is exocytosed during the cortical reaction in response to oocyte activation and inactivates the sperm galactosyltransferase-binding site, accounting for the block in sperm binding to the zona pellucida. The sequence is that of Beta-hexosaminidase subunit beta from Rattus norvegicus (Rat).